A 167-amino-acid polypeptide reads, in one-letter code: uncharacterized protein (167 aa).

3 residues coordinate a divalent metal cation: His48, His127, and His131.

This sequence belongs to the DinB family.

This is an uncharacterized protein from Bacillus subtilis (strain 168).